The sequence spans 716 residues: Polyribonucleotide nucleotidyltransferase (716 aa).

Residues D480 and D486 each contribute to the Mg(2+) site. The KH domain maps to 547 to 606; it reads PKIVQLQIDIDKISLVIGSTGKTVKAITDEFEVKVQIEQNGKIILFGDDDFKMQKAKERI. The S1 motif domain maps to 616–711; that stretch reads GEIYEGTVKK…KFGKIDLEIV (96 aa).

This sequence belongs to the polyribonucleotide nucleotidyltransferase family. Requires Mg(2+) as cofactor.

Its subcellular location is the cytoplasm. The enzyme catalyses RNA(n+1) + phosphate = RNA(n) + a ribonucleoside 5'-diphosphate. In terms of biological role, involved in mRNA degradation. Catalyzes the phosphorolysis of single-stranded polyribonucleotides processively in the 3'- to 5'-direction. In Borreliella burgdorferi (strain ATCC 35210 / DSM 4680 / CIP 102532 / B31) (Borrelia burgdorferi), this protein is Polyribonucleotide nucleotidyltransferase.